Here is a 519-residue protein sequence, read N- to C-terminus: Ribonuclease Y 1 (519 aa).

A helical membrane pass occupies residues Ile2–Phe22. The disordered stretch occupies residues Gln84–Arg113. Residues Thr209 to Met294 form the KH domain. An HD domain is found at Val335–Ala428.

This sequence belongs to the RNase Y family.

It localises to the cell membrane. Its function is as follows. Endoribonuclease that initiates mRNA decay. In Pediococcus pentosaceus (strain ATCC 25745 / CCUG 21536 / LMG 10740 / 183-1w), this protein is Ribonuclease Y 1.